Consider the following 436-residue polypeptide: MANVVVIGAQWGDEGKGKITDLLSRSADVVVRYQGGVNAGHTIVVDDKVLKLHLIPSGILYKNKTCLIGSGTVVDPKILLKEIDMLIDNEIDISGLKLSSTSHVTMPYHRILDEAMEADRGSNKIGTTGRGIGPTYADKSQRNGIRVRDLLNKERLRDVIEIPLREKNGLLEKIYGIKPLKTEDIVEEYLDYGERLSKHVVDCTRTIHSASKNKKNILFEGAQGTLLDLDHGTYPFVTSSNPISGGACIGAGVGPTLIDRVIGVAKAYTTRVGEGPFPTELQGSINDQLCDRGSEFGTTTGRRRRCGWFDGVIGKYAVSVNGLDCLAVTKLDVLDELDEIQVCIAYDLDGERIDYFPTNSDDLKKCKPIFKKLKGWQCSTANCRNLSDLPQNAMNYLRFLAELMEVPIAIVSLGANRDQTIVIEDPIHGPKRALLR.

GTP contacts are provided by residues 12–18 (GDEGKGK) and 40–42 (GHT). Residue Asp13 is the Proton acceptor of the active site. Residues Asp13 and Gly40 each coordinate Mg(2+). Residues 13–16 (DEGK), 38–41 (NAGH), Thr128, Arg142, Gln223, Thr238, and Arg302 each bind IMP. The Proton donor role is filled by His41. 298 to 304 (TTTGRRR) contributes to the substrate binding site. GTP is bound by residues Arg304, 330-332 (KLD), and 412-414 (SLG).

It belongs to the adenylosuccinate synthetase family. Homodimer. Mg(2+) serves as cofactor.

It is found in the cytoplasm. The catalysed reaction is IMP + L-aspartate + GTP = N(6)-(1,2-dicarboxyethyl)-AMP + GDP + phosphate + 2 H(+). It functions in the pathway purine metabolism; AMP biosynthesis via de novo pathway; AMP from IMP: step 1/2. Its function is as follows. Plays an important role in the de novo pathway of purine nucleotide biosynthesis. Catalyzes the first committed step in the biosynthesis of AMP from IMP. The protein is Adenylosuccinate synthetase of Prochlorococcus marinus (strain MIT 9312).